The sequence spans 617 residues: Vacuolar protein sorting-associated protein 33B (617 aa).

N-acetylalanine is present on Ala2.

Belongs to the STXBP/unc-18/SEC1 family. Interacts with RAB11A and VIPAS39. Associates with adaptor protein complex 3 (AP-3), clathrin:AP-3 and clathrin:HGS complexes. Post-translationally, phosphorylated on tyrosine residues. In terms of tissue distribution, ubiquitous.

It localises to the late endosome membrane. Its subcellular location is the lysosome membrane. It is found in the early endosome. The protein localises to the cytoplasmic vesicle. The protein resides in the clathrin-coated vesicle. It localises to the recycling endosome. In terms of biological role, may play a role in vesicle-mediated protein trafficking to lysosomal compartments and in membrane docking/fusion reactions of late endosomes/lysosomes. Mediates phagolysosomal fusion in macrophages. Proposed to be involved in endosomal maturation implicating VIPAS39. In epithelial cells, the VPS33B:VIPAS39 complex may play a role in the apical recycling pathway and in the maintenance of the apical-basolateral polarity. Seems to be involved in the sorting of specific cargos from the trans-Golgi network to alpha-granule-destined multivesicular bodies (MVBs) promoting MVBs maturation in megakaryocytes. This chain is Vacuolar protein sorting-associated protein 33B (Vps33b), found in Rattus norvegicus (Rat).